We begin with the raw amino-acid sequence, 91 residues long: Small ribosomal subunit protein uS19 (91 aa).

The protein belongs to the universal ribosomal protein uS19 family.

Functionally, protein S19 forms a complex with S13 that binds strongly to the 16S ribosomal RNA. The sequence is that of Small ribosomal subunit protein uS19 from Psychrobacter arcticus (strain DSM 17307 / VKM B-2377 / 273-4).